A 376-amino-acid polypeptide reads, in one-letter code: Chorismate synthase (376 aa).

Residues R39 and R45 each coordinate NADP(+). Residues 115-117 (RSS), G276, 291-295 (KPIPT), and R317 contribute to the FMN site.

The protein belongs to the chorismate synthase family. In terms of assembly, homotetramer. The cofactor is FMNH2.

It catalyses the reaction 5-O-(1-carboxyvinyl)-3-phosphoshikimate = chorismate + phosphate. Its pathway is metabolic intermediate biosynthesis; chorismate biosynthesis; chorismate from D-erythrose 4-phosphate and phosphoenolpyruvate: step 7/7. Its function is as follows. Catalyzes the anti-1,4-elimination of the C-3 phosphate and the C-6 proR hydrogen from 5-enolpyruvylshikimate-3-phosphate (EPSP) to yield chorismate, which is the branch point compound that serves as the starting substrate for the three terminal pathways of aromatic amino acid biosynthesis. This reaction introduces a second double bond into the aromatic ring system. This is Chorismate synthase from Thermotoga sp. (strain RQ2).